A 190-amino-acid polypeptide reads, in one-letter code: MEPSHSNTGQSRSVDRKTVEKNRRMQMKSLYSELISLLPHHSSTEPLTLPDQLDEAANYIKKLQVNVEKKRERKRNLVATTTLEKLNSVGSSSVSSSVDVSVPRKLPKIEIQETGSIFHIFLVTSLEHKFMFCEIIRVLTEELGAEITHAGYSIVDDAVFHTLHCKVEEHDYGARSQIPERLEKIVNSVH.

A compositionally biased stretch (polar residues) spans 1 to 12 (MEPSHSNTGQSR). A disordered region spans residues 1 to 21 (MEPSHSNTGQSRSVDRKTVEK). In terms of domain architecture, bHLH spans 11 to 63 (SRSVDRKTVEKNRRMQMKSLYSELISLLPHHSSTEPLTLPDQLDEAANYIKKL).

Belongs to the bHLH protein family.

It localises to the nucleus. In Arabidopsis thaliana (Mouse-ear cress), this protein is Transcription factor bHLH162.